Reading from the N-terminus, the 276-residue chain is uncharacterized protein (276 aa).

The first 29 residues, 1 to 29 (MKSHVRSFKTYIRDEIIKKGGWVNAHAHA), serve as a signal peptide directing secretion.

Belongs to the metallo-dependent hydrolases superfamily.

This is an uncharacterized protein from Haemophilus influenzae (strain ATCC 51907 / DSM 11121 / KW20 / Rd).